The sequence spans 392 residues: Heat-inducible transcription repressor HrcA (392 aa).

Belongs to the HrcA family.

Functionally, negative regulator of class I heat shock genes (grpE-dnaK-dnaJ and groELS operons). Prevents heat-shock induction of these operons. This chain is Heat-inducible transcription repressor HrcA, found in Chlamydia trachomatis serovar D (strain ATCC VR-885 / DSM 19411 / UW-3/Cx).